We begin with the raw amino-acid sequence, 629 residues long: MFYQDPFDVIIIGGGHAGTEAAMAAARMGQQTLLLTHNIDTLGQMSCNPAIGGIGKGHLVKEVDALGGLMAKAIDQAGIQFRILNASKGPAVRATRAQADRVLYRQAVRTALENQPNLMIFQQAVEDLIVENDRVVGAVTQMGLKFRAKAVVLTVGTFLDGKIHIGLDNYSGGRAGDPPSIPLSRRLRELPLRVSRLKTGTPPRIDARTIDFSVLAQQHGDNPMPVFSFMGNASQHPQQVPCYITHTNEKTHDVIRNNLDRSPMYAGVIEGIGPRYCPSIEDKVMRFADRNQHQIFLEPEGLTSNEIYPNGISTSLPFDVQMQIVRSMQGMENAKIVRPGYAIEYDFFDPRDLKPTLESKFIHGLFFAGQINGTTGYEEAAAQGLLAGLNAARLSADKEGWAPARSQAYLGVLVDDLCTLGTKEPYRMFTSRAEYRLMLREDNADLRLTEMGRELGLVDDERWARFNEKLENIERERQRLKSTWVTPSAESADEVNAHLTTPLSREASGEDLLRRPEMTYAQLTSLAAFAPALEDEQAAEQVEIQVKYEGYIARQQDEIEKQLRNENTLLPATLDYRQVSGLSNEVIAKLNDHKPASIGQASRISGVTPAAISILLVWLKKQGMLRRSA.

Residues 13–18, Val-125, and Ser-180 contribute to the FAD site; that span reads GGGHAG. 273–287 lines the NAD(+) pocket; sequence GPRYCPSIEDKVMRF. Gln-370 is an FAD binding site.

It belongs to the MnmG family. As to quaternary structure, homodimer. Heterotetramer of two MnmE and two MnmG subunits. It depends on FAD as a cofactor.

Its subcellular location is the cytoplasm. In terms of biological role, NAD-binding protein involved in the addition of a carboxymethylaminomethyl (cmnm) group at the wobble position (U34) of certain tRNAs, forming tRNA-cmnm(5)s(2)U34. The chain is tRNA uridine 5-carboxymethylaminomethyl modification enzyme MnmG from Salmonella agona (strain SL483).